We begin with the raw amino-acid sequence, 486 residues long: Serine/threonine-protein phosphatase 2A 56 kDa regulatory subunit alpha isoform (486 aa).

N-acetylserine is present on Ser2. The tract at residues 22-52 (DGFTRKSVRKAQRQKRSQGSSQFRSQGSQAE) is disordered. A compositionally biased stretch (basic residues) spans 27 to 37 (KSVRKAQRQKR). The span at 38-51 (SQGSSQFRSQGSQA) shows a compositional bias: low complexity. A phosphoserine mark is found at Ser41, Ser42, and Ser49.

It belongs to the phosphatase 2A regulatory subunit B56 family. In terms of assembly, PP2A consists of a common heterodimeric core enzyme, composed of a 36 kDa catalytic subunit (subunit C) and a 65 kDa constant regulatory subunit (PR65 or subunit A), that associates with a variety of regulatory subunits. Proteins that associate with the core dimer include three families of regulatory subunits B (the R2/B/PR55/B55, R3/B''/PR72/PR130/PR59 and R5/B'/B56 families), the 48 kDa variable regulatory subunit, viral proteins, and cell signaling molecules. Interacts with SGO1. In terms of tissue distribution, widely expressed with highest levels in thymus and ovary.

It is found in the cytoplasm. Its subcellular location is the nucleus. The protein resides in the chromosome. The protein localises to the centromere. The B regulatory subunit might modulate substrate selectivity and catalytic activity, and might also direct the localization of the catalytic enzyme to a particular subcellular compartment. The protein is Serine/threonine-protein phosphatase 2A 56 kDa regulatory subunit alpha isoform (Ppp2r5a) of Mus musculus (Mouse).